The chain runs to 809 residues: Hydrazine synthase subunit alpha (809 aa).

A signal peptide spans 1–27 (MGKRKLGVIASAFVAGALVCGSTLVNA). Cys303 serves as a coordination point for Zn(2+). Residues Cys583 and Cys586 each coordinate heme. Position 587 (His587) interacts with Zn(2+). The heme site is built by Tyr591, Cys685, Cys688, His689, and His772. The region spanning 633–792 (KGVKHGEDVV…AIVEWIDLGA (160 aa)) is the Cytochrome c domain.

Part of the hydrazine synthase complex that forms an elongated dimer of heterotrimers composed of one alpha, one beta and one gamma subunit. Heme c serves as cofactor.

Its subcellular location is the anammoxosome. The catalysed reaction is hydrazine + 3 Fe(III)-[cytochrome c] + H2O = nitric oxide + 3 Fe(II)-[cytochrome c] + NH4(+) + 2 H(+). It participates in nitrogen metabolism. Component of the hydrazine synthase complex that catalyzes the condensation of nitric oxide (NO) with ammonium to form hydrazine. The alpha subunit catalyzes the second half-reaction, i.e. the condensation of hydroxylamine formed in the active site of the gamma subunit with ammonia, yielding hydrazine. Is involved in anaerobic ammonium oxidation (anammox), a biological process in which nitrite is used as the electron acceptor in the conversion of ammonium to dinitrogen gas (N2) and water; this bacterial process has a major role in the Earth's nitrogen cycle and has been estimated to synthesize up to 50% of the dinitrogen gas emitted into our atmosphere from the oceans. The chain is Hydrazine synthase subunit alpha from Kuenenia stuttgartiensis.